The following is a 102-amino-acid chain: Small ribosomal subunit protein eS24 (102 aa).

Belongs to the eukaryotic ribosomal protein eS24 family.

This is Small ribosomal subunit protein eS24 from Methanococcus maripaludis (strain C5 / ATCC BAA-1333).